Reading from the N-terminus, the 227-residue chain is Riboflavin kinase (227 aa).

The interval 1–92 (MSKDYEVFPL…LKRTIDSSTF (92 aa)) is H-T-H motif-like. The tract at residues 93–227 (LTLRGYVVPG…GDKVEVVIPV (135 aa)) is riboflavin kinase. Position 102-107 (102-107 (GLGEGA)) interacts with CDP. 2 residues coordinate Mg(2+): Thr131 and Asn133. Residues Thr194 and Glu202 each coordinate FMN. 207-210 (VRLR) lines the CDP pocket.

It belongs to the archaeal riboflavin kinase family. Mg(2+) serves as cofactor.

The catalysed reaction is riboflavin + CTP = CDP + FMN + H(+). It participates in cofactor biosynthesis; FMN biosynthesis; FMN from riboflavin (CTP route): step 1/1. Its function is as follows. Catalyzes the CTP-dependent phosphorylation of riboflavin (vitamin B2) to form flavin mononucleotide (FMN). This chain is Riboflavin kinase (ribK), found in Thermofilum pendens (strain DSM 2475 / Hrk 5).